Consider the following 399-residue polypeptide: Lysosomal acid lipase/cholesteryl ester hydrolase (399 aa).

A signal peptide spans 1 to 27 (MKMRFLGLVVCLVLWTLHSEGSGGKLT). A propeptide spans 28–76 (AVDPETNMNVSEIISYWGFPSEEYLVETEDGYILCLNRIPHGRKNHSDK) (removed in mature form). N-linked (GlcNAc...) asparagine glycans are attached at residues Asn-36, Asn-72, Asn-101, and Asn-161. One can recognise an AB hydrolase-1 domain in the interval 80 to 380 (PVVFLQHGLL…EWEHLDFIWG (301 aa)). Ser-174 acts as the Charge relay system in catalysis. 2 N-linked (GlcNAc...) asparagine glycosylation sites follow: Asn-273 and Asn-321. Residue His-374 is the Charge relay system of the active site.

This sequence belongs to the AB hydrolase superfamily. Lipase family. In terms of assembly, monomer. Glycosylation is not essential for catalytic activity. As to expression, most abundantly expressed in brain, lung, kidney and mammary gland, a moderate expression seen in placenta and expressed at low levels in the liver and heart.

Its subcellular location is the lysosome. It catalyses the reaction a sterol ester + H2O = a sterol + a fatty acid + H(+). It carries out the reaction cholesteryl (9Z-octadecenoate) + H2O = cholesterol + (9Z)-octadecenoate + H(+). The catalysed reaction is a triacylglycerol + H2O = a 1,2-diacylglycerol + a fatty acid + H(+). The enzyme catalyses 1,2-di-(9Z-octadecenoyl)-glycerol + (9Z)-octadecenoate + H(+) = 1,2,3-tri-(9Z-octadecenoyl)-glycerol + H2O. It catalyses the reaction a 1,2-diacylglycerol + H2O = a 1-acylglycerol + a fatty acid + H(+). It carries out the reaction 1,2-di-(9Z-octadecenoyl)-glycerol + H2O = 1-(9Z-octadecenoyl)-glycerol + (9Z)-octadecenoate + H(+). The catalysed reaction is a 1,3-diacylglycerol + H2O = a 1-acylglycerol + a fatty acid + H(+). The enzyme catalyses 1,3-di-(9Z-octadecenoyl)-glycerol + H2O = 1-(9Z-octadecenoyl)-glycerol + (9Z)-octadecenoate + H(+). Functionally, catalyzes the deacylation of cholesteryl ester core lipids of endocytosed low density lipoproteins to generate free fatty acids and cholesterol. Hydrolyzes triglycerides (1,2,3-triacylglycerol) and diglycerides (such as 1,2-diacylglycerol and 1,3-diacylglycerol) with preference for the acyl moieties at the sn-1 or sn-3 positions. The chain is Lysosomal acid lipase/cholesteryl ester hydrolase (LIPA) from Homo sapiens (Human).